We begin with the raw amino-acid sequence, 334 residues long: Holliday junction branch migration complex subunit RuvB (334 aa).

The large ATPase domain (RuvB-L) stretch occupies residues 1–182 (MNERMVDQSM…FGVHLRLEYY (182 aa)). ATP-binding positions include Leu21, Arg22, Gly63, Lys66, Thr67, Thr68, 129-131 (EDF), Arg172, Tyr182, and Arg219. Thr67 is a binding site for Mg(2+). The small ATPAse domain (RuvB-S) stretch occupies residues 183–253 (NESDLKEIII…TTKHALGLLQ (71 aa)). The tract at residues 256–334 (QHGLDYIDHK…HFAKSNEERG (79 aa)) is head domain (RuvB-H). Residues Arg292, Arg311, and Arg316 each coordinate DNA.

This sequence belongs to the RuvB family. As to quaternary structure, homohexamer. Forms an RuvA(8)-RuvB(12)-Holliday junction (HJ) complex. HJ DNA is sandwiched between 2 RuvA tetramers; dsDNA enters through RuvA and exits via RuvB. An RuvB hexamer assembles on each DNA strand where it exits the tetramer. Each RuvB hexamer is contacted by two RuvA subunits (via domain III) on 2 adjacent RuvB subunits; this complex drives branch migration. In the full resolvosome a probable DNA-RuvA(4)-RuvB(12)-RuvC(2) complex forms which resolves the HJ.

Its subcellular location is the cytoplasm. The catalysed reaction is ATP + H2O = ADP + phosphate + H(+). Its function is as follows. The RuvA-RuvB-RuvC complex processes Holliday junction (HJ) DNA during genetic recombination and DNA repair, while the RuvA-RuvB complex plays an important role in the rescue of blocked DNA replication forks via replication fork reversal (RFR). RuvA specifically binds to HJ cruciform DNA, conferring on it an open structure. The RuvB hexamer acts as an ATP-dependent pump, pulling dsDNA into and through the RuvAB complex. RuvB forms 2 homohexamers on either side of HJ DNA bound by 1 or 2 RuvA tetramers; 4 subunits per hexamer contact DNA at a time. Coordinated motions by a converter formed by DNA-disengaged RuvB subunits stimulates ATP hydrolysis and nucleotide exchange. Immobilization of the converter enables RuvB to convert the ATP-contained energy into a lever motion, pulling 2 nucleotides of DNA out of the RuvA tetramer per ATP hydrolyzed, thus driving DNA branch migration. The RuvB motors rotate together with the DNA substrate, which together with the progressing nucleotide cycle form the mechanistic basis for DNA recombination by continuous HJ branch migration. Branch migration allows RuvC to scan DNA until it finds its consensus sequence, where it cleaves and resolves cruciform DNA. The sequence is that of Holliday junction branch migration complex subunit RuvB from Staphylococcus aureus (strain N315).